Reading from the N-terminus, the 289-residue chain is MFFQDIIQNLNKFWSEEGCLIMQPYDTEKGAGTMNPHTFLRAIGPEPWSVAYAEPCRRPTDGRFGDNPNRAQHYFQYQVIIKPSPDRIQEKYLSSLEFLGINPKEHDIRFVEDNWESPTLGAWGVGWEVWLDGMEVTQFTYFQQCGGVDCNPIPIEITYGLERIATFLQDKESIWDLDWNKDFNYSDIWLQFEKNQCEFNFRASNPENMRKLFSIYQEEAVSLLDKKLTFPALDFVLKCSHCFNLLDARGVISVTDRAQYIEKIRKLAREVASSWIIERESLKFPLLKK.

Belongs to the class-II aminoacyl-tRNA synthetase family. In terms of assembly, tetramer of two alpha and two beta subunits.

Its subcellular location is the cytoplasm. It catalyses the reaction tRNA(Gly) + glycine + ATP = glycyl-tRNA(Gly) + AMP + diphosphate. The sequence is that of Glycine--tRNA ligase alpha subunit from Prochlorococcus marinus (strain MIT 9515).